The chain runs to 1097 residues: Leukemia inhibitory factor receptor (1097 aa).

The N-terminal stretch at M1–S44 is a signal peptide. The Extracellular segment spans residues Q45–S833. Residues A49 to T138 form the Fibronectin type-III 1 domain. 2 cysteine pairs are disulfide-bonded: C55–C65 and C82–C90. N-linked (GlcNAc...) asparagine glycans are attached at residues N64, N85, N131, N143, N191, N243, and N303. C213 and C270 form a disulfide bridge. Fibronectin type-III domains follow at residues T335–H434, T435–S534, G538–D629, P627–I719, and P724–S833. The cysteines at positions 341 and 351 are disulfide-linked. N-linked (GlcNAc...) asparagine glycosylation is found at N390, N407, N426, N445, N481, and N489. C466 and C511 form a disulfide bridge. Residues W519–S523 carry the WSXWS motif motif. N-linked (GlcNAc...) asparagine glycans are attached at residues N572, N652, N663, N680, N729, and N787. The chain crosses the membrane as a helical span at residues V834–C858. The Cytoplasmic portion of the chain corresponds to Y859–D1097. The Box 1 motif signature appears at F869–E877. S927 is subject to Phosphoserine. Residues P983–M1005 are disordered. Phosphoserine is present on S1044. The tract at residues R1066–D1097 is disordered. Over residues S1086–D1097 the composition is skewed to polar residues.

The protein belongs to the type I cytokine receptor family. Type 2 subfamily. Heterodimer composed of LIFR and IL6ST. The heterodimer formed by LIFR and IL6ST interacts with the complex formed by CNTF and CNTFR.

The protein localises to the cell membrane. Its subcellular location is the secreted. Functionally, signal-transducing molecule. May have a common pathway with IL6ST. The soluble form inhibits the biological activity of LIF by blocking its binding to receptors on target cells. The protein is Leukemia inhibitory factor receptor (LIFR) of Homo sapiens (Human).